Consider the following 232-residue polypeptide: Vesicle transport through interaction with t-SNAREs homolog 1B (232 aa).

Position 2 is an N-acetylalanine (A2). Interaction with CLINT1 regions lie at residues 2-23 (AASA…GLLE) and 69-73 (APLTF). The Cytoplasmic segment spans residues 2-208 (AASAASSEHF…SRKVITNKLL (207 aa)). Positions 36–98 (AGTEEKKKLV…AKLHREVRST (63 aa)) form a coiled coil. At R107 the chain carries Omega-N-methylarginine. A Phosphoserine modification is found at S138. A coiled-coil region spans residues 160-201 (GTEIIEELGEQRDQLERTKSRLVNTNENLSKSRKILRSMSRK). The helical; Anchor for type IV membrane protein transmembrane segment at 209–229 (LSVIILLELAILVGLVYYKFF) threads the bilayer. The Vesicular segment spans residues 230–232 (RHH).

It belongs to the VTI1 family. In terms of assembly, forms a SNARE complex with STX7, STX8 and VAMP8 which functions in the homotypic fusion of late endosomes. Component of the SNARE complex composed of STX7, STX8, VAMP7 and VIT1B that is required for heterotypic fusion of late endosomes with lysosomes. May interact with STX17. Interacts with CLINT1. Broadly expressed.

The protein resides in the early endosome membrane. Its subcellular location is the late endosome membrane. It localises to the lysosome membrane. The protein localises to the cytoplasmic granule. It is found in the recycling endosome membrane. V-SNARE that mediates vesicle transport pathways through interactions with t-SNAREs on the target membrane. These interactions are proposed to mediate aspects of the specificity of vesicle trafficking and to promote fusion of the lipid bilayers. This chain is Vesicle transport through interaction with t-SNAREs homolog 1B (Vti1b), found in Mus musculus (Mouse).